The sequence spans 101 residues: Urease subunit beta (101 aa).

Belongs to the urease beta subunit family. Heterotrimer of UreA (gamma), UreB (beta) and UreC (alpha) subunits. Three heterotrimers associate to form the active enzyme.

It localises to the cytoplasm. It catalyses the reaction urea + 2 H2O + H(+) = hydrogencarbonate + 2 NH4(+). It participates in nitrogen metabolism; urea degradation; CO(2) and NH(3) from urea (urease route): step 1/1. The sequence is that of Urease subunit beta from Burkholderia cenocepacia (strain ATCC BAA-245 / DSM 16553 / LMG 16656 / NCTC 13227 / J2315 / CF5610) (Burkholderia cepacia (strain J2315)).